Here is a 197-residue protein sequence, read N- to C-terminus: Holliday junction branch migration complex subunit RuvA (197 aa).

The tract at residues 1–63 (MYDYIKGNLT…EDAHLLYGFH (63 aa)) is domain I. The segment at 64–142 (TEDEKAVFLN…DINEVSTDKS (79 aa)) is domain II. A flexible linker region spans residues 143-147 (KVSTI). A domain III region spans residues 148–197 (NNNQELEEAVEALLALGYKTNELKKIEKFFEGTTDTAENYIKSALKMLMK).

The protein belongs to the RuvA family. Homotetramer. Forms an RuvA(8)-RuvB(12)-Holliday junction (HJ) complex. HJ DNA is sandwiched between 2 RuvA tetramers; dsDNA enters through RuvA and exits via RuvB. An RuvB hexamer assembles on each DNA strand where it exits the tetramer. Each RuvB hexamer is contacted by two RuvA subunits (via domain III) on 2 adjacent RuvB subunits; this complex drives branch migration. In the full resolvosome a probable DNA-RuvA(4)-RuvB(12)-RuvC(2) complex forms which resolves the HJ.

Its subcellular location is the cytoplasm. In terms of biological role, the RuvA-RuvB-RuvC complex processes Holliday junction (HJ) DNA during genetic recombination and DNA repair, while the RuvA-RuvB complex plays an important role in the rescue of blocked DNA replication forks via replication fork reversal (RFR). RuvA specifically binds to HJ cruciform DNA, conferring on it an open structure. The RuvB hexamer acts as an ATP-dependent pump, pulling dsDNA into and through the RuvAB complex. HJ branch migration allows RuvC to scan DNA until it finds its consensus sequence, where it cleaves and resolves the cruciform DNA. This Streptococcus mutans serotype c (strain ATCC 700610 / UA159) protein is Holliday junction branch migration complex subunit RuvA.